A 201-amino-acid polypeptide reads, in one-letter code: MGDPKYPRRVWRKPKRPLNYELKMEELKTLGTFGLRTKRELWKAHTELSRVRHQARSLLALRQEVRAEKEPILMKSLARIGLVSSDATLDDVLNLTANDLLSRRLQTIVTKKLGFKTPYQARQAVIHGHIMIGERKVDIPSYTVTVEEENSIHFAPESKIPQVLEKTKSEAPAEETVEAPAEETVEAPAEEKKEESPSTES.

The region spanning 103–167 is the S4 RNA-binding domain; the sequence is RRLQTIVTKK…SKIPQVLEKT (65 aa). Residues 163–201 are disordered; sequence VLEKTKSEAPAEETVEAPAEETVEAPAEEKKEESPSTES. The span at 172–185 shows a compositional bias: acidic residues; it reads PAEETVEAPAEETV. Residues 189-201 are compositionally biased toward basic and acidic residues; that stretch reads AEEKKEESPSTES.

The protein belongs to the universal ribosomal protein uS4 family. As to quaternary structure, part of the 30S ribosomal subunit. Contacts protein S5. The interaction surface between S4 and S5 is involved in control of translational fidelity.

In terms of biological role, one of the primary rRNA binding proteins, it binds directly to 16S rRNA where it nucleates assembly of the body of the 30S subunit. Functionally, with S5 and S12 plays an important role in translational accuracy. The chain is Small ribosomal subunit protein uS4 from Nitrosopumilus maritimus (strain SCM1).